The primary structure comprises 347 residues: Dihydroorotase (347 aa).

Residues histidine 14 and histidine 16 each contribute to the Zn(2+) site. Substrate contacts are provided by residues 16–18 and asparagine 42; that span reads HLR. 3 residues coordinate Zn(2+): lysine 100, histidine 137, and histidine 175. Lysine 100 carries the N6-carboxylysine modification. Histidine 137 contributes to the substrate binding site. Residue leucine 220 coordinates substrate. Aspartate 248 is a Zn(2+) binding site. Aspartate 248 is a catalytic residue. Positions 252 and 264 each coordinate substrate.

It belongs to the metallo-dependent hydrolases superfamily. DHOase family. Class II DHOase subfamily. In terms of assembly, homodimer. Zn(2+) is required as a cofactor.

The catalysed reaction is (S)-dihydroorotate + H2O = N-carbamoyl-L-aspartate + H(+). It participates in pyrimidine metabolism; UMP biosynthesis via de novo pathway; (S)-dihydroorotate from bicarbonate: step 3/3. In terms of biological role, catalyzes the reversible cyclization of carbamoyl aspartate to dihydroorotate. The protein is Dihydroorotase of Stutzerimonas stutzeri (strain A1501) (Pseudomonas stutzeri).